The chain runs to 150 residues: Catabolic 3-dehydroquinase (150 aa).

The Proton acceptor role is filled by Tyr-24. Substrate contacts are provided by Asn-75, His-81, and Asp-88. Residue His-101 is the Proton donor of the active site. Substrate is bound by residues 102–103 (IS) and Arg-112.

The protein belongs to the type-II 3-dehydroquinase family. As to quaternary structure, homododecamer. Adopts a ring-like structure, composed of an arrangement of two hexameric rings stacked on top of one another.

The enzyme catalyses 3-dehydroquinate = 3-dehydroshikimate + H2O. It participates in aromatic compound metabolism; 3,4-dihydroxybenzoate biosynthesis; 3,4-dihydroxybenzoate from 3-dehydroquinate: step 1/2. Functionally, is involved in the catabolism of quinate. Allows the utilization of quinate as carbon source via the beta-ketoadipate pathway. The polypeptide is Catabolic 3-dehydroquinase (Verticillium alfalfae (strain VaMs.102 / ATCC MYA-4576 / FGSC 10136) (Verticillium wilt of alfalfa)).